The following is a 356-amino-acid chain: Tyrosine recombinase XerS (356 aa).

Positions 16 to 121 (IMPWYVLDYY…ALSSLYKYLT (106 aa)) constitute a Core-binding (CB) domain. In terms of domain architecture, Tyr recombinase spans 169 to 354 (AFLDYVDKEY…VNDEQKNALD (186 aa)). Catalysis depends on residues Arg210, Lys234, His306, Arg309, and His332. Catalysis depends on Tyr341, which acts as the O-(3'-phospho-DNA)-tyrosine intermediate.

Belongs to the 'phage' integrase family. XerS subfamily.

The protein localises to the cytoplasm. Its activity is regulated as follows. FtsK is required for recombination. Its function is as follows. Site-specific tyrosine recombinase, which acts by catalyzing the cutting and rejoining of the recombining DNA molecules. Essential to convert dimers of the bacterial chromosome into monomers to permit their segregation at cell division. The chain is Tyrosine recombinase XerS from Streptococcus pyogenes serotype M6 (strain ATCC BAA-946 / MGAS10394).